Consider the following 29-residue polypeptide: Augerpeptide hheTx2 (29 aa).

Contains 4 disulfide bonds. In terms of tissue distribution, expressed by the venom duct.

Its subcellular location is the secreted. The sequence is that of Augerpeptide hheTx2 from Hastula hectica (Sea snail).